A 401-amino-acid polypeptide reads, in one-letter code: L-methionine gamma-lyase (401 aa).

Residues 59–61 (YTR) and 89–90 (GI) contribute to the pyridoxal 5'-phosphate site. Y114 serves as a coordination point for substrate. Residue 210-212 (SAT) coordinates pyridoxal 5'-phosphate. N6-(pyridoxal phosphate)lysine is present on K213. Position 377 (R377) interacts with substrate.

This sequence belongs to the trans-sulfuration enzymes family. L-methionine gamma-lyase subfamily. In terms of assembly, homotetramer; dimer of active dimers. The cofactor is pyridoxal 5'-phosphate.

It carries out the reaction L-methionine + H2O = methanethiol + 2-oxobutanoate + NH4(+). The enzyme catalyses L-homocysteine + H2O = 2-oxobutanoate + hydrogen sulfide + NH4(+) + H(+). Functionally, catalyzes the alpha,gamma-elimination of L-methionine to produce methanethiol, 2-oxobutanoate and ammonia; methanethiol (methyl mercaptan) is considered to be one of the main causes of the oral malodor associated with periodontitis and may also play a role in the pathogenicity of T.denticola. Also displays homocysteine desulfhydrase activity, degrading homocysteine to produce hydrogen sulfide, 2-oxobutanoate and ammonia. This Treponema denticola (strain ATCC 35405 / DSM 14222 / CIP 103919 / JCM 8153 / KCTC 15104) protein is L-methionine gamma-lyase.